Consider the following 449-residue polypeptide: Major capsid protein (449 aa).

One can recognise a BIG2 domain in the interval 349 to 427 (AVTQVIVSPA…TVDIGTADEP (79 aa)).

It belongs to the phi29likevirus major capsid protein family. Homohexamer. Homopentamer. The prolate capsid is composed of pentamers and hexamers of the capsid protein.

Its subcellular location is the virion. Functionally, assembles to form a prolate capsid shell of about 54 nm in length and 45 nm in width, with a T=3, Q=5 symmetry. This Bacillus subtilis (Bacteriophage B103) protein is Major capsid protein (8).